A 409-amino-acid chain; its full sequence is Phosphatidylserine decarboxylase proenzyme, mitochondrial (409 aa).

A mitochondrion-targeting transit peptide spans methionine 1 to lysine 52. Over isoleucine 53 to leucine 63 the chain is Mitochondrial matrix. A helical transmembrane segment spans residues leucine 64–glutamine 82. The Mitochondrial intermembrane segment spans residues tyrosine 83–leucine 409. Residues aspartate 191, histidine 267, and serine 378 each act as charge relay system; for autoendoproteolytic cleavage activity in the active site. Serine 378 acts as the Schiff-base intermediate with substrate; via pyruvic acid; for decarboxylase activity in catalysis. Pyruvic acid (Ser); by autocatalysis is present on serine 378.

It belongs to the phosphatidylserine decarboxylase family. PSD-B subfamily. Eukaryotic type I sub-subfamily. In terms of assembly, heterodimer of a large membrane-associated beta subunit and a small pyruvoyl-containing alpha subunit. Pyruvate is required as a cofactor. In terms of processing, is synthesized initially as an inactive proenzyme. Formation of the active enzyme involves a self-maturation process in which the active site pyruvoyl group is generated from an internal serine residue via an autocatalytic post-translational modification. Two non-identical subunits are generated from the proenzyme in this reaction, and the pyruvate is formed at the N-terminus of the alpha chain, which is derived from the carboxyl end of the proenzyme. The autoendoproteolytic cleavage occurs by a canonical serine protease mechanism, in which the side chain hydroxyl group of the serine supplies its oxygen atom to form the C-terminus of the beta chain, while the remainder of the serine residue undergoes an oxidative deamination to produce ammonia and the pyruvoyl prosthetic group on the alpha chain. During this reaction, the Ser that is part of the protease active site of the proenzyme becomes the pyruvoyl prosthetic group, which constitutes an essential element of the active site of the mature decarboxylase.

Its subcellular location is the mitochondrion inner membrane. The protein localises to the lipid droplet. It is found in the cytoplasm. It carries out the reaction a 1,2-diacyl-sn-glycero-3-phospho-L-serine + H(+) = a 1,2-diacyl-sn-glycero-3-phosphoethanolamine + CO2. Its pathway is phospholipid metabolism; phosphatidylethanolamine biosynthesis. Its function is as follows. Catalyzes the formation of phosphatidylethanolamine (PtdEtn) from phosphatidylserine (PtdSer). Plays a central role in phospholipid metabolism and in the interorganelle trafficking of phosphatidylserine. May be involved in lipid droplet biogenesis at the endoplasmic reticulum membrane. The chain is Phosphatidylserine decarboxylase proenzyme, mitochondrial from Pongo abelii (Sumatran orangutan).